The chain runs to 186 residues: LIM domain-containing protein DDB_G0271356 (186 aa).

3 LIM zinc-binding domains span residues 7-67 (PECY…DKFA), 68-127 (PKCQ…KIGF), and 128-186 (LCRH…KLYG).

The polypeptide is LIM domain-containing protein DDB_G0271356 (Dictyostelium discoideum (Social amoeba)).